A 132-amino-acid polypeptide reads, in one-letter code: Translation initiation factor 5A (132 aa).

Hypusine is present on Lys36.

The protein belongs to the eIF-5A family.

Its subcellular location is the cytoplasm. Its function is as follows. Functions by promoting the formation of the first peptide bond. The chain is Translation initiation factor 5A (eIF5A) from Caldivirga maquilingensis (strain ATCC 700844 / DSM 13496 / JCM 10307 / IC-167).